The chain runs to 253 residues: 5'/3'-nucleotidase SurE (253 aa).

A divalent metal cation is bound by residues D8, D9, S39, and N92.

Belongs to the SurE nucleotidase family. A divalent metal cation serves as cofactor.

It localises to the cytoplasm. It carries out the reaction a ribonucleoside 5'-phosphate + H2O = a ribonucleoside + phosphate. The catalysed reaction is a ribonucleoside 3'-phosphate + H2O = a ribonucleoside + phosphate. It catalyses the reaction [phosphate](n) + H2O = [phosphate](n-1) + phosphate + H(+). Its function is as follows. Nucleotidase with a broad substrate specificity as it can dephosphorylate various ribo- and deoxyribonucleoside 5'-monophosphates and ribonucleoside 3'-monophosphates with highest affinity to 3'-AMP. Also hydrolyzes polyphosphate (exopolyphosphatase activity) with the preference for short-chain-length substrates (P20-25). Might be involved in the regulation of dNTP and NTP pools, and in the turnover of 3'-mononucleotides produced by numerous intracellular RNases (T1, T2, and F) during the degradation of various RNAs. The protein is 5'/3'-nucleotidase SurE of Salmonella paratyphi A (strain AKU_12601).